Here is a 559-residue protein sequence, read N- to C-terminus: DNA ligase (559 aa).

Glutamate 231 contributes to the ATP binding site. Catalysis depends on lysine 233, which acts as the N6-AMP-lysine intermediate. ATP-binding residues include arginine 238 and glutamate 285. Mg(2+) is bound by residues glutamate 285 and glutamate 379. The ATP site is built by lysine 384 and lysine 399.

Belongs to the ATP-dependent DNA ligase family. As to quaternary structure, interacts with host TOP2A and TOP2B. Mg(2+) serves as cofactor.

It localises to the host cytoplasm. The enzyme catalyses ATP + (deoxyribonucleotide)n-3'-hydroxyl + 5'-phospho-(deoxyribonucleotide)m = (deoxyribonucleotide)n+m + AMP + diphosphate.. In terms of biological role, DNA ligase that seals nicks in double-stranded DNA during DNA replication, DNA recombination and DNA repair. Recruits cellular topoisomerase II to sites of viral replication and assembly. This is DNA ligase (OPG180) from Monkeypox virus.